The sequence spans 236 residues: Ribosome assembly factor MRT4 (236 aa).

This sequence belongs to the universal ribosomal protein uL10 family. In terms of assembly, associates with the pre-60S ribosomal particle.

It is found in the nucleus. The protein resides in the nucleolus. It localises to the cytoplasm. Component of the ribosome assembly machinery. Nuclear paralog of the ribosomal protein P0, it binds pre-60S subunits at an early stage of assembly in the nucleolus, and is replaced by P0 in cytoplasmic pre-60S subunits and mature 80S ribosomes. The sequence is that of Ribosome assembly factor MRT4 from Saccharomyces cerevisiae (strain ATCC 204508 / S288c) (Baker's yeast).